The primary structure comprises 193 residues: 3-isopropylmalate dehydratase small subunit (193 aa).

It belongs to the LeuD family. LeuD type 1 subfamily. Heterodimer of LeuC and LeuD.

It carries out the reaction (2R,3S)-3-isopropylmalate = (2S)-2-isopropylmalate. It participates in amino-acid biosynthesis; L-leucine biosynthesis; L-leucine from 3-methyl-2-oxobutanoate: step 2/4. Functionally, catalyzes the isomerization between 2-isopropylmalate and 3-isopropylmalate, via the formation of 2-isopropylmaleate. The protein is 3-isopropylmalate dehydratase small subunit of Bacillus thuringiensis subsp. konkukian (strain 97-27).